Consider the following 409-residue polypeptide: Arginine biosynthesis bifunctional protein ArgJ (409 aa).

The substrate site is built by T156, K182, T193, E280, N404, and S409. T193 functions as the Nucleophile in the catalytic mechanism.

It belongs to the ArgJ family. Heterotetramer of two alpha and two beta chains.

Its subcellular location is the cytoplasm. It carries out the reaction N(2)-acetyl-L-ornithine + L-glutamate = N-acetyl-L-glutamate + L-ornithine. The enzyme catalyses L-glutamate + acetyl-CoA = N-acetyl-L-glutamate + CoA + H(+). Its pathway is amino-acid biosynthesis; L-arginine biosynthesis; L-ornithine and N-acetyl-L-glutamate from L-glutamate and N(2)-acetyl-L-ornithine (cyclic): step 1/1. The protein operates within amino-acid biosynthesis; L-arginine biosynthesis; N(2)-acetyl-L-ornithine from L-glutamate: step 1/4. Catalyzes two activities which are involved in the cyclic version of arginine biosynthesis: the synthesis of N-acetylglutamate from glutamate and acetyl-CoA as the acetyl donor, and of ornithine by transacetylation between N(2)-acetylornithine and glutamate. The polypeptide is Arginine biosynthesis bifunctional protein ArgJ (Ralstonia nicotianae (strain ATCC BAA-1114 / GMI1000) (Ralstonia solanacearum)).